Reading from the N-terminus, the 228-residue chain is Geranylgeranylglyceryl phosphate synthase (228 aa).

Sn-glycerol 1-phosphate is bound at residue Lys13. Mg(2+) contacts are provided by Asp15 and Thr41. Residues 159 to 164 (YVEYSG), Gly189, and 209 to 210 (GN) each bind sn-glycerol 1-phosphate.

Belongs to the GGGP/HepGP synthase family. Group I subfamily. Requires Mg(2+) as cofactor.

Its subcellular location is the cytoplasm. The enzyme catalyses sn-glycerol 1-phosphate + (2E,6E,10E)-geranylgeranyl diphosphate = sn-3-O-(geranylgeranyl)glycerol 1-phosphate + diphosphate. Its pathway is membrane lipid metabolism; glycerophospholipid metabolism. Its function is as follows. Prenyltransferase that catalyzes the transfer of the geranylgeranyl moiety of geranylgeranyl diphosphate (GGPP) to the C3 hydroxyl of sn-glycerol-1-phosphate (G1P). This reaction is the first ether-bond-formation step in the biosynthesis of archaeal membrane lipids. The protein is Geranylgeranylglyceryl phosphate synthase of Methanosphaerula palustris (strain ATCC BAA-1556 / DSM 19958 / E1-9c).